A 127-amino-acid chain; its full sequence is Aspartate 1-decarboxylase (127 aa).

Residue Ser-25 is the Schiff-base intermediate with substrate; via pyruvic acid of the active site. At Ser-25 the chain carries Pyruvic acid (Ser). Residue Thr-57 coordinates substrate. Tyr-58 serves as the catalytic Proton donor. 73–75 (GSA) is a substrate binding site.

The protein belongs to the PanD family. Heterooctamer of four alpha and four beta subunits. Pyruvate is required as a cofactor. Post-translationally, is synthesized initially as an inactive proenzyme, which is activated by self-cleavage at a specific serine bond to produce a beta-subunit with a hydroxyl group at its C-terminus and an alpha-subunit with a pyruvoyl group at its N-terminus.

It localises to the cytoplasm. The catalysed reaction is L-aspartate + H(+) = beta-alanine + CO2. It functions in the pathway cofactor biosynthesis; (R)-pantothenate biosynthesis; beta-alanine from L-aspartate: step 1/1. In terms of biological role, catalyzes the pyruvoyl-dependent decarboxylation of aspartate to produce beta-alanine. In Polaromonas naphthalenivorans (strain CJ2), this protein is Aspartate 1-decarboxylase.